Here is a 156-residue protein sequence, read N- to C-terminus: Small ribosomal subunit protein uS7 (156 aa).

Belongs to the universal ribosomal protein uS7 family. Part of the 30S ribosomal subunit. Contacts proteins S9 and S11.

One of the primary rRNA binding proteins, it binds directly to 16S rRNA where it nucleates assembly of the head domain of the 30S subunit. Is located at the subunit interface close to the decoding center, probably blocks exit of the E-site tRNA. This Shewanella piezotolerans (strain WP3 / JCM 13877) protein is Small ribosomal subunit protein uS7.